The chain runs to 521 residues: Occludin (521 aa).

A disordered region spans residues 1–20 (MSVRPFESPPPYRPDEFKPN). At 1 to 66 (MSVRPFESPP…KWTSPPGVIR (66 aa)) the chain is on the cytoplasmic side. The 208-residue stretch at 60–267 (SPPGVIRILS…IIFFAVKTRR (208 aa)) folds into the MARVEL domain. A helical transmembrane segment spans residues 67–89 (ILSMLIIVMCIAIFACVASTLAW). Residues 90 to 133 (DRGYGTGLFGGSLNYPYSGFGYGGGYGGGYGGYGYGYGGYTDPR) are Extracellular-facing. The chain crosses the membrane as a helical span at residues 134-158 (AAKGFLLAMAAFCFIASLVIFVTSV). Over 159-168 (IRSGMSRTRR) the chain is Cytoplasmic. Residues 169–193 (YYLIVIIVSAILGIMVFIATIVYIM) form a helical membrane-spanning segment. The Extracellular portion of the chain corresponds to 194 to 241 (GVNPTAQASGSMYGSQIYMICNQFYTPGGTGLYVDQYLYHYCVVDPQE). A disulfide bridge connects residues cysteine 214 and cysteine 235. The chain crosses the membrane as a helical span at residues 242–263 (AIAIVLGFMIIVAFALIIFFAV). Over 264-521 (KTRRKMDRYD…MVGDYDRRKP (258 aa)) the chain is Cytoplasmic. Serine 300 carries the post-translational modification Phosphoserine. Positions 300–329 (SAGTQDMPPPPSDYAERVDSPMAYSSNGKV) are disordered. A Phosphothreonine modification is found at threonine 303. A phosphoserine mark is found at serine 311 and serine 319. Serine 338 carries the phosphoserine; by PKC; in vitro modification. A Phosphoserine modification is found at serine 358. A disordered region spans residues 361–405 (DFRQPRYSSNGNLETPSKRAPTKGKAGKGKRTDPDHYETDYTTGG). Residues 366–375 (RYSSNGNLET) show a composition bias toward polar residues. A Phosphotyrosine modification is found at tyrosine 367. Residues serine 368 and serine 369 each carry the phosphoserine modification. Basic residues predominate over residues 380–389 (APTKGKAGKG). The segment covering 390-399 (KRTDPDHYET) has biased composition (basic and acidic residues). Phosphotyrosine is present on residues tyrosine 397 and tyrosine 401. Threonine 402 bears the Phosphothreonine; by PKC/PRKCH mark. At threonine 403 the chain carries Phosphothreonine. Residue serine 407 is modified to Phosphoserine. In terms of domain architecture, OCEL spans 413 to 521 (EDWVREYPPI…MVGDYDRRKP (109 aa)). Residues 424 to 488 (SDQQRQLYKR…EYNRLKQVKG (65 aa)) adopt a coiled-coil conformation. A Phosphoserine modification is found at serine 489.

It belongs to the ELL/occludin family. Interacts with TJP1/ZO1. Interacts with VAPA. Interacts with CLDN1, CLDN6, CLDN9, CLDN11, CLDN12 and CLDN17. Interacts with PLSCR1. Interacts with LSR, ILDR1 and ILDR2. Interacts with TJP2/ZO2. Dephosphorylated by PTPRJ. May be phosphorylated by PKC during translocation to cell-cell contacts. Localized at tight junctions of both epithelial and endothelial cells. Highly expressed in the testis, kidney, lung, liver and brain. Not detected in skeletal muscle, spleen and heart.

It localises to the cell membrane. The protein resides in the cell junction. Its subcellular location is the tight junction. May play a role in the formation and regulation of the tight junction (TJ) paracellular permeability barrier. The chain is Occludin (Ocln) from Mus musculus (Mouse).